Here is a 443-residue protein sequence, read N- to C-terminus: Probable glutamate dehydrogenase (443 aa).

Lysine 86 is an active-site residue.

Belongs to the Glu/Leu/Phe/Val dehydrogenases family.

The enzyme catalyses L-glutamate + NAD(+) + H2O = 2-oxoglutarate + NH4(+) + NADH + H(+). It carries out the reaction L-glutamate + NADP(+) + H2O = 2-oxoglutarate + NH4(+) + NADPH + H(+). This Sinorhizobium fredii (strain NBRC 101917 / NGR234) protein is Probable glutamate dehydrogenase.